A 290-amino-acid polypeptide reads, in one-letter code: Dual-specificity RNA pseudouridine synthase RluF (290 aa).

The S4 RNA-binding domain maps to 7–72; the sequence is VRLNKYISES…EAEDLVLIAL (66 aa). Interaction with RNA stretches follow at residues 105–108 and 187–190; these read RLDK and RQIR. Asp-107 (nucleophile) is an active-site residue. Residues 243–290 are disordered; it reads VKPKAKAKPKTAGIKRPVVKMEKTAEKGGRPASNGKRFTSPGRKKKGR. Residues 261 to 271 show a composition bias toward basic and acidic residues; sequence VKMEKTAEKGG.

This sequence belongs to the pseudouridine synthase RsuA family. In terms of assembly, monomer.

The enzyme catalyses uridine(2604) in 23S rRNA = pseudouridine(2604) in 23S rRNA. It carries out the reaction uridine(35) in tRNA(Tyr) = pseudouridine(35) in tRNA(Tyr). In terms of biological role, dual specificity enzyme that catalyzes the synthesis of pseudouridine from uracil-2604 in 23S ribosomal RNA and from uracil-35 in the anticodon of tRNA(Tyr). Can, to a small extent, also react with uracil-2605. The sequence is that of Dual-specificity RNA pseudouridine synthase RluF (rluF) from Escherichia coli (strain K12).